Here is a 536-residue protein sequence, read N- to C-terminus: MASKQIMFDENARKALLNGVDKVANTVKITLGPKGRYVVLDKSTKPVVTNDGVTIAKEIELHDKFENMGAKLVKEVASKTQDNTGDGTTTATLLAQSMIREGLKNISAGANPIDVKKGIEMATENVVGYLKSKSSEVKGKEKIVQVATVSANNDEEIGNLIADAMERVGYNGVITVEDSKTMETNLDVVEGMQFDRGFVSPYMATDSEKMVCEFEDPYILITDKKINSMKQIVPVLEKVASEGRSLLIIAEDVDGDAQAALILNIIRGALRVCAVKAPGFGNERKEMLEDIAVLTGGQVISEDKGMKLEEFDDYMLGSARKVTIDNNKTIIVEGKGDKAKIKERVSLIEAQINIADVEYKKTELKKRQAKLGGGVAVIKVGAATETELKEKKMRIDDALNATKAAVEEGVVIGGGISLFRAAAILDSLKLEGDREIGVKIVQRAIEEPVRQIAENAGKEGAEVVATIRAEPRELFGYNAKKDVFEDLFEAGVIDPTKVVRSGLQNAASIAGMVLTTEALVTDFNDEKDEKAATIII.

Residues 30 to 33, 86 to 90, G414, and D494 contribute to the ATP site; these read TLGP and DGTTT.

Belongs to the chaperonin (HSP60) family. In terms of assembly, forms a cylinder of 14 subunits composed of two heptameric rings stacked back-to-back. Interacts with the co-chaperonin GroES.

It localises to the cytoplasm. The enzyme catalyses ATP + H2O + a folded polypeptide = ADP + phosphate + an unfolded polypeptide.. In terms of biological role, together with its co-chaperonin GroES, plays an essential role in assisting protein folding. The GroEL-GroES system forms a nano-cage that allows encapsulation of the non-native substrate proteins and provides a physical environment optimized to promote and accelerate protein folding. This Methanosarcina barkeri (strain Fusaro / DSM 804) protein is Chaperonin GroEL.